A 580-amino-acid polypeptide reads, in one-letter code: Acyl-coenzyme A synthetase ACSM4, mitochondrial (580 aa).

Residues 1–22 (MKVLLHCQRLRFIWLAKPAGRH) constitute a mitochondrion transit peptide. ATP-binding positions include 229–237 (TSGTTGSPK), 368–373 (EGYGQT), aspartate 455, arginine 470, and lysine 566.

The protein belongs to the ATP-dependent AMP-binding enzyme family. Mg(2+) is required as a cofactor. It depends on Mn(2+) as a cofactor.

Its subcellular location is the mitochondrion. It catalyses the reaction a medium-chain fatty acid + ATP + CoA = a medium-chain fatty acyl-CoA + AMP + diphosphate. The enzyme catalyses hexanoate + ATP + CoA = hexanoyl-CoA + AMP + diphosphate. The catalysed reaction is octanoate + ATP + CoA = octanoyl-CoA + AMP + diphosphate. It carries out the reaction decanoate + ATP + CoA = decanoyl-CoA + AMP + diphosphate. It catalyses the reaction dodecanoate + ATP + CoA = dodecanoyl-CoA + AMP + diphosphate. Catalyzes the activation of fatty acids by CoA to produce an acyl-CoA, the first step in fatty acid metabolism. Capable of activating medium-chain fatty acids with a preference for C6-12 fatty acids. The polypeptide is Acyl-coenzyme A synthetase ACSM4, mitochondrial (Acsm4) (Mus musculus (Mouse)).